The following is an 89-amino-acid chain: Large ribosomal subunit protein bL28 (89 aa).

The protein belongs to the bacterial ribosomal protein bL28 family.

This is Large ribosomal subunit protein bL28 from Chlamydia felis (strain Fe/C-56) (Chlamydophila felis).